Here is a 360-residue protein sequence, read N- to C-terminus: Photosystem II protein D1 3 (360 aa).

3 helical membrane passes run 29–46, 118–133, and 142–156; these read YVGWFGVLMIPTLLAATI, HFLIGVFCYMGREWEL, and WICVAYSAPVAAATA. Chlorophyll a is bound at residue His118. Position 126 (Tyr126) interacts with pheophytin a. [CaMn4O5] cluster-binding residues include Asp170 and Glu189. A helical membrane pass occupies residues 197 to 218; it reads FHQLGVAGVFGGALFSAMHGSL. His198 is a chlorophyll a binding site. A quinone is bound by residues His215 and 264–265; that span reads SF. Residue His215 participates in Fe cation binding. His272 is a binding site for Fe cation. The chain crosses the membrane as a helical span at residues 274 to 288; sequence FLAAWPVIGIWFTAL. Residues His332, Glu333, Asp342, and Ala344 each contribute to the [CaMn4O5] cluster site. Residues 345–360 constitute a propeptide that is removed on maturation; sequence SAESAPVAMIAPSING.

The protein belongs to the reaction center PufL/M/PsbA/D family. As to quaternary structure, PSII is composed of 1 copy each of membrane proteins PsbA, PsbB, PsbC, PsbD, PsbE, PsbF, PsbH, PsbI, PsbJ, PsbK, PsbL, PsbM, PsbT, PsbX, PsbY, PsbZ, Psb30/Ycf12, peripheral proteins PsbO, CyanoQ (PsbQ), PsbU, PsbV and a large number of cofactors. It forms dimeric complexes. Precursor protein interacts with Ycf48. The D1/D2 heterodimer binds P680, chlorophylls that are the primary electron donor of PSII, and subsequent electron acceptors. It shares a non-heme iron and each subunit binds pheophytin, quinone, additional chlorophylls, carotenoids and lipids. D1 provides most of the ligands for the Mn4-Ca-O5 cluster of the oxygen-evolving complex (OEC). There is also a Cl(-1) ion associated with D1 and D2, which is required for oxygen evolution. The PSII complex binds additional chlorophylls, carotenoids and specific lipids. serves as cofactor. Post-translationally, C-terminally processed by CtpA; processing is essential to allow assembly of the oxygen-evolving complex and thus photosynthetic growth. Tyr-161 forms a radical intermediate that is referred to as redox-active TyrZ, YZ or Y-Z.

The protein resides in the cellular thylakoid membrane. The enzyme catalyses 2 a plastoquinone + 4 hnu + 2 H2O = 2 a plastoquinol + O2. Functionally, photosystem II (PSII) is a light-driven water:plastoquinone oxidoreductase that uses light energy to abstract electrons from H(2)O, generating O(2) and a proton gradient subsequently used for ATP formation. It consists of a core antenna complex that captures photons, and an electron transfer chain that converts photonic excitation into a charge separation. The D1/D2 (PsbA/PsbD) reaction center heterodimer binds P680, the primary electron donor of PSII as well as several subsequent electron acceptors. The sequence is that of Photosystem II protein D1 3 from Thermosynechococcus vestitus (strain NIES-2133 / IAM M-273 / BP-1).